Here is a 209-residue protein sequence, read N- to C-terminus: Ribosomal RNA large subunit methyltransferase E (209 aa).

S-adenosyl-L-methionine is bound by residues Gly63, Trp65, Asp83, Asp99, and Asp124. Catalysis depends on Lys164, which acts as the Proton acceptor.

Belongs to the class I-like SAM-binding methyltransferase superfamily. RNA methyltransferase RlmE family.

Its subcellular location is the cytoplasm. The enzyme catalyses uridine(2552) in 23S rRNA + S-adenosyl-L-methionine = 2'-O-methyluridine(2552) in 23S rRNA + S-adenosyl-L-homocysteine + H(+). Functionally, specifically methylates the uridine in position 2552 of 23S rRNA at the 2'-O position of the ribose in the fully assembled 50S ribosomal subunit. This Vibrio vulnificus (strain CMCP6) protein is Ribosomal RNA large subunit methyltransferase E.